The chain runs to 213 residues: Dephospho-CoA kinase (213 aa).

The DPCK domain occupies 3 to 202 (RIGLTGGIGS…QSYLALADKH (200 aa)). An ATP-binding site is contributed by 11-16 (GSGKTR).

Belongs to the CoaE family.

The protein resides in the cytoplasm. The enzyme catalyses 3'-dephospho-CoA + ATP = ADP + CoA + H(+). It functions in the pathway cofactor biosynthesis; coenzyme A biosynthesis; CoA from (R)-pantothenate: step 5/5. In terms of biological role, catalyzes the phosphorylation of the 3'-hydroxyl group of dephosphocoenzyme A to form coenzyme A. The chain is Dephospho-CoA kinase from Bordetella avium (strain 197N).